A 393-amino-acid chain; its full sequence is MANDFLFTSESVSEGHPDKVADQISDAILDAIFTQDPRSRVAAETLTNTGLVVLAGEITTNAHVDYIQVARDTIQRIGYDNTEYGIDYKGCAVLVAYDKQSNDIAQGVDHASDDHLNTGAGDQGLMFGYACDETPELMPAPIYYAHRLVERQAQLRKDGRLPFLRPDAKSQVTMRYVDGKPHSIDTVVLSTQHSPDQSETATKMKASFTEAIIEEIIKPVLPKEWLQDTKYLINPTGRFVIGGPQGDCGLTGRKIIVDTYGGACPHGGGAFSGKDPTKVDRSAAYAARYVAKNIVAAGLARQCQIQVAYAIGVARPMNITVYTEGTGVIPDDQIAQLVQEHFDLRPKGIIQMLDLLRPIYAKTAAYGHFGREEPEFTWERTDKAAALRAAAGL.

Histidine 16 is a binding site for ATP. Mg(2+) is bound at residue aspartate 18. Residue glutamate 44 coordinates K(+). Residues glutamate 57 and glutamine 100 each contribute to the L-methionine site. Positions 100–110 (QSNDIAQGVDH) are flexible loop. ATP is bound by residues 167–169 (DAK), 238–239 (RF), aspartate 247, 253–254 (RK), alanine 270, and lysine 274. Residue aspartate 247 coordinates L-methionine. Residue lysine 278 coordinates L-methionine.

This sequence belongs to the AdoMet synthase family. In terms of assembly, homotetramer; dimer of dimers. Mg(2+) serves as cofactor. Requires K(+) as cofactor.

The protein localises to the cytoplasm. It catalyses the reaction L-methionine + ATP + H2O = S-adenosyl-L-methionine + phosphate + diphosphate. It functions in the pathway amino-acid biosynthesis; S-adenosyl-L-methionine biosynthesis; S-adenosyl-L-methionine from L-methionine: step 1/1. Functionally, catalyzes the formation of S-adenosylmethionine (AdoMet) from methionine and ATP. The overall synthetic reaction is composed of two sequential steps, AdoMet formation and the subsequent tripolyphosphate hydrolysis which occurs prior to release of AdoMet from the enzyme. This Acidovorax sp. (strain JS42) protein is S-adenosylmethionine synthase.